We begin with the raw amino-acid sequence, 69 residues long: Large ribosomal subunit protein uL29 (69 aa).

Belongs to the universal ribosomal protein uL29 family.

The chain is Large ribosomal subunit protein uL29 from Rhodopseudomonas palustris (strain TIE-1).